Consider the following 361-residue polypeptide: Innexin inx1 (361 aa).

The Cytoplasmic segment spans residues 1 to 28; that stretch reads MYKLLGGLKEYLKWQDIVTDNAIFRLHN. The helical transmembrane segment at 29–49 threads the bilayer; sequence LFTTVLLLTCSLIITATQYVG. At 50-109 the chain is on the extracellular side; it reads NPIHCIVNGLPVRPINTYCWITSTFTMPDAFLRQVGSEVAHPGVANDFGDEDAKKYYTYY. A helical transmembrane segment spans residues 110–130; it reads QWVCFVLFFQAMLCYTPKWIW. Topologically, residues 131-181 are cytoplasmic; the sequence is DSIEGGLLRTLIMGLNRGLCQDDEKCMKKKALIEYLLRHIKRHNMYALKYW. Residues 182 to 202 form a helical membrane-spanning segment; that stretch reads FCETLCLVNIIGQLYLMNHFF. Residues 203 to 267 are Extracellular-facing; the sequence is DGEFFSYGLR…LPLNIVNEKT (65 aa). A helical membrane pass occupies residues 268–288; the sequence is YIFLWFWYIILAALLSVLVVY. Residues 289–361 lie on the Cytoplasmic side of the membrane; sequence RAVILAVPSV…KIETPSSNNP (73 aa).

Belongs to the pannexin family. In terms of tissue distribution, expressed in embryonic neural precursors including the dorsal median neuroblast, glial cells, neuropilar glial ring, developing myoblasts cells and in a circumferential band of epithelial cells at the trochanter/coxa boundary stripe in the developing limb.

The protein localises to the cell membrane. It is found in the cell junction. Its subcellular location is the gap junction. Its function is as follows. Structural components of the gap junctions. This chain is Innexin inx1 (inx1), found in Schistocerca americana (American grasshopper).